The chain runs to 302 residues: Proline dehydrogenase 1 (302 aa).

K95 lines the substrate pocket. D129 is a catalytic residue. The FAD site is built by M130 and Q158. Residue R179 is part of the active site. Residues 182–184 and 221–222 contribute to the FAD site; these read KGA and TH. 283 to 284 is a substrate binding site; it reads RR.

It belongs to the proline dehydrogenase family. FAD serves as cofactor.

It carries out the reaction L-proline + a quinone = (S)-1-pyrroline-5-carboxylate + a quinol + H(+). Its pathway is amino-acid degradation; L-proline degradation into L-glutamate; L-glutamate from L-proline: step 1/2. Functionally, converts proline to delta-1-pyrroline-5-carboxylate. In Bacillus subtilis (strain 168), this protein is Proline dehydrogenase 1 (fadM).